Consider the following 862-residue polypeptide: Transcription factor E2F7 (862 aa).

DNA-binding regions lie at residues 140-209 (RKQK…CWHG) and 279-364 (RKDK…KWIG). 3 disordered regions span residues 561–592 (PGSDSPTLEETTMSKQERPTKRQLNDKDDAPL), 617–643 (TPEQLQHVSREEEYNTEPVTKHSNVGE), and 788–862 (KADS…SAGN). Polar residues predominate over residues 564-574 (DSPTLEETTMS). Residues 575 to 590 (KQERPTKRQLNDKDDA) are compositionally biased toward basic and acidic residues. Composition is skewed to polar residues over residues 633 to 643 (EPVTKHSNVGE) and 832 to 851 (DVSSSRKPQRTQTRTSSSAQ).

Belongs to the E2F/DP family. In terms of assembly, homodimer and heterodimer: mainly forms homodimers and, to a lesser extent, heterodimers with e2f8.

The protein localises to the nucleus. In terms of biological role, atypical E2F transcription factor that participates in various processes such as angiogenesis and polyploidization of specialized cells. Mainly acts as a transcription repressor that binds DNA independently of DP proteins and specifically recognizes the E2 recognition site 5'-TTTC[CG]CGC-3'. Directly represses transcription of classical E2F transcription factors such as e2f1. Acts as a regulator of S-phase by recognizing and binding the E2-related site 5'-TTCCCGCC-3' and mediating repression of G1/S-regulated genes. Acts as a promoter of sprouting angiogenesis, possibly by acting as a transcription activator. The polypeptide is Transcription factor E2F7 (e2f7) (Xenopus tropicalis (Western clawed frog)).